Here is a 357-residue protein sequence, read N- to C-terminus: MDHFDQDTYHNLPVEIWKHIIDSDIDSTINLLFSCKQFIGLVCILTNNLNLLNLLVKKGNLKFLEFYFRLNTETNKLYTEQRLRVEQNECLKMSCIHGCLEILKYLISIGVDFRMNDDEPLMLAIENGHLKIVQFLYSKRVNIRARNNRPLVLSCEKGYINIVNFLLDKKASFVSKQNEVFSTACGFGQMDIVKLLVEKGADINVGKIPPIRAAAAGGHLNVIEHLVNKGASINKCSVDSLFSAAFYGHLNIVKYLLGYISEVNIIYYAFEKACINGHIDIVQYLFSENIITKDIITENSNTRYLFYHTIRNKHKHIIKFLIENNIFDKDKKYPDILESAPKDMDPYDYLISFLNYQ.

ANK repeat units follow at residues 34–63 (SCKQ…NLKF), 86–115 (EQNE…DFRM), 116–145 (NDDE…NIRA), 147–175 (NNRP…SFVS), 176–205 (KQNE…DINV), 206–235 (GKIP…SINK), 237–265 (SVDS…EVNI), 267–294 (YYAF…ITKD), and 301–331 (NTRY…DKDK).

The chain is Putative ankyrin repeat protein L42 from Acanthamoeba polyphaga (Amoeba).